The following is a 98-amino-acid chain: Cystatin-A (98 aa).

An N-acetylmethionine modification is found at methionine 1. A Secondary area of contact motif is present at residues 46 to 50 (QVVAG).

Belongs to the cystatin family. In terms of tissue distribution, expressed in the skin throughout the epidermis.

The protein localises to the cytoplasm. Functionally, this is an intracellular thiol proteinase inhibitor. Has an important role in desmosome-mediated cell-cell adhesion in the lower levels of the epidermis. The polypeptide is Cystatin-A (CSTA) (Homo sapiens (Human)).